A 330-amino-acid polypeptide reads, in one-letter code: Glycerol-3-phosphate dehydrogenase [NAD(P)+] (330 aa).

4 residues coordinate NADPH: serine 11, phenylalanine 12, arginine 32, and lysine 106. Positions 106, 133, and 135 each coordinate sn-glycerol 3-phosphate. An NADPH-binding site is contributed by alanine 137. Sn-glycerol 3-phosphate is bound by residues lysine 188, aspartate 241, serine 251, arginine 252, and asparagine 253. Lysine 188 (proton acceptor) is an active-site residue. Residue arginine 252 coordinates NADPH. NADPH is bound by residues valine 276 and glutamate 278.

This sequence belongs to the NAD-dependent glycerol-3-phosphate dehydrogenase family.

The protein resides in the cytoplasm. It catalyses the reaction sn-glycerol 3-phosphate + NAD(+) = dihydroxyacetone phosphate + NADH + H(+). It carries out the reaction sn-glycerol 3-phosphate + NADP(+) = dihydroxyacetone phosphate + NADPH + H(+). The protein operates within membrane lipid metabolism; glycerophospholipid metabolism. Its function is as follows. Catalyzes the reduction of the glycolytic intermediate dihydroxyacetone phosphate (DHAP) to sn-glycerol 3-phosphate (G3P), the key precursor for phospholipid synthesis. The protein is Glycerol-3-phosphate dehydrogenase [NAD(P)+] of Clostridium botulinum (strain Alaska E43 / Type E3).